We begin with the raw amino-acid sequence, 490 residues long: Betaine aldehyde dehydrogenase (490 aa).

Positions 26, 27, and 93 each coordinate K(+). Residue 150-152 (GAW) participates in NAD(+) binding. Catalysis depends on Lys-162, which acts as the Charge relay system. 176 to 179 (KPSE) is a binding site for NAD(+). Val-180 contacts K(+). Residue 230–233 (GTDT) participates in NAD(+) binding. Leu-246 is a K(+) binding site. The Proton acceptor role is filled by Glu-252. Residues Gly-254, Cys-286, and Glu-387 each coordinate NAD(+). Catalysis depends on Cys-286, which acts as the Nucleophile. Cys-286 carries the post-translational modification Cysteine sulfenic acid (-SOH). 2 residues coordinate K(+): Lys-457 and Gly-460. Glu-464 (charge relay system) is an active-site residue.

It belongs to the aldehyde dehydrogenase family. Dimer of dimers. K(+) serves as cofactor.

The enzyme catalyses betaine aldehyde + NAD(+) + H2O = glycine betaine + NADH + 2 H(+). It participates in amine and polyamine biosynthesis; betaine biosynthesis via choline pathway; betaine from betaine aldehyde: step 1/1. Involved in the biosynthesis of the osmoprotectant glycine betaine. Catalyzes the irreversible oxidation of betaine aldehyde to the corresponding acid. The protein is Betaine aldehyde dehydrogenase of Pseudomonas syringae pv. tomato (strain ATCC BAA-871 / DC3000).